The chain runs to 435 residues: MKKHLLAGACALAMGFAVIPGTFADETCNSPFTTALITGQEQYLHVWTLGMPGVGDESDKLVTISVDPKSDKYGKVINTLSVGGRGEAHHTGFTDDRRYLWAGRLDDNKIFIFDLIDPANPKLIKTITDFADRTGYVGPHTFYALPGRMLIQALSNTKTHDGQTGLAVYSNAGELVSLHPMPVTDGGDGYGYDIGINPAKNVLLTSSFTGWNNYMMDLGKMVKDPEAMKRFGNTMAIWDLKSMKAEKILNVPGAPLEIRWSLKPEHNWAYTATALTSKLWLIKQDDKGEWIAKETGTIGDPSKIPLPVDISITADAKGLWVNTFLDGTTRFYDISEPEHPKEVFSKKMGNQVNMVSQSYDGKRVYFTTSLIANWDKKGAENDQWLKAYDWDGKELVEKFTVDFNELKLGRAHHMKFSSKTNAAELGTNQSFPTRQ.

The N-terminal stretch at 1–24 is a signal peptide; the sequence is MKKHLLAGACALAMGFAVIPGTFA.

This sequence belongs to the selenium-binding protein family. In terms of assembly, homotetramer. Cu cation is required as a cofactor.

The protein resides in the periplasm. It catalyses the reaction methanethiol + O2 + H2O = hydrogen sulfide + formaldehyde + H2O2 + H(+). Its pathway is organosulfur degradation. Inhibited by EDTA but not by EGTA. Its function is as follows. Catalyzes the oxidation of methanethiol. Can also degrade ethanethiol, but not methanol, methylamine or dimethylsulfide. This Hyphomicrobium sp protein is Methanethiol oxidase.